Reading from the N-terminus, the 530-residue chain is Phosphoenolpyruvate carboxykinase (ATP) (530 aa).

3 residues coordinate substrate: arginine 59, tyrosine 198, and lysine 204. ATP-binding positions include lysine 204, histidine 223, and 239–247; that span reads GLSGTGKTT. Positions 204 and 223 each coordinate Mn(2+). Aspartate 260 is a Mn(2+) binding site. Residues glutamate 288, arginine 325, 440–441, and threonine 446 each bind ATP; that span reads RI. Substrate is bound at residue arginine 325.

Belongs to the phosphoenolpyruvate carboxykinase (ATP) family. Requires Mn(2+) as cofactor.

Its subcellular location is the cytoplasm. The catalysed reaction is oxaloacetate + ATP = phosphoenolpyruvate + ADP + CO2. It functions in the pathway carbohydrate biosynthesis; gluconeogenesis. Functionally, involved in the gluconeogenesis. Catalyzes the conversion of oxaloacetate (OAA) to phosphoenolpyruvate (PEP) through direct phosphoryl transfer between the nucleoside triphosphate and OAA. The chain is Phosphoenolpyruvate carboxykinase (ATP) from Azobacteroides pseudotrichonymphae genomovar. CFP2.